Reading from the N-terminus, the 141-residue chain is Large ribosomal subunit protein uL11 (141 aa).

This sequence belongs to the universal ribosomal protein uL11 family. In terms of assembly, part of the ribosomal stalk of the 50S ribosomal subunit. Interacts with L10 and the large rRNA to form the base of the stalk. L10 forms an elongated spine to which L12 dimers bind in a sequential fashion forming a multimeric L10(L12)X complex. Post-translationally, one or more lysine residues are methylated.

Forms part of the ribosomal stalk which helps the ribosome interact with GTP-bound translation factors. This is Large ribosomal subunit protein uL11 from Streptococcus pyogenes serotype M1.